The sequence spans 475 residues: Aspartyl/glutamyl-tRNA(Asn/Gln) amidotransferase subunit B (475 aa).

This sequence belongs to the GatB/GatE family. GatB subfamily. In terms of assembly, heterotrimer of A, B and C subunits.

It catalyses the reaction L-glutamyl-tRNA(Gln) + L-glutamine + ATP + H2O = L-glutaminyl-tRNA(Gln) + L-glutamate + ADP + phosphate + H(+). It carries out the reaction L-aspartyl-tRNA(Asn) + L-glutamine + ATP + H2O = L-asparaginyl-tRNA(Asn) + L-glutamate + ADP + phosphate + 2 H(+). Allows the formation of correctly charged Asn-tRNA(Asn) or Gln-tRNA(Gln) through the transamidation of misacylated Asp-tRNA(Asn) or Glu-tRNA(Gln) in organisms which lack either or both of asparaginyl-tRNA or glutaminyl-tRNA synthetases. The reaction takes place in the presence of glutamine and ATP through an activated phospho-Asp-tRNA(Asn) or phospho-Glu-tRNA(Gln). This Chromobacterium violaceum (strain ATCC 12472 / DSM 30191 / JCM 1249 / CCUG 213 / NBRC 12614 / NCIMB 9131 / NCTC 9757 / MK) protein is Aspartyl/glutamyl-tRNA(Asn/Gln) amidotransferase subunit B.